The primary structure comprises 412 residues: Multifunctional CCA protein (412 aa).

ATP is bound by residues glycine 8 and arginine 11. CTP-binding residues include glycine 8 and arginine 11. Glutamate 21 and aspartate 23 together coordinate Mg(2+). Arginine 91, arginine 137, and arginine 140 together coordinate ATP. Arginine 91, arginine 137, and arginine 140 together coordinate CTP. Residues 228 to 329 (CGIHTLMSLQ…WRLLQRLDVL (102 aa)) form the HD domain.

This sequence belongs to the tRNA nucleotidyltransferase/poly(A) polymerase family. Bacterial CCA-adding enzyme type 1 subfamily. Monomer. Can also form homodimers and oligomers. Mg(2+) serves as cofactor. Requires Ni(2+) as cofactor.

The catalysed reaction is a tRNA precursor + 2 CTP + ATP = a tRNA with a 3' CCA end + 3 diphosphate. The enzyme catalyses a tRNA with a 3' CCA end + 2 CTP + ATP = a tRNA with a 3' CCACCA end + 3 diphosphate. Catalyzes the addition and repair of the essential 3'-terminal CCA sequence in tRNAs without using a nucleic acid template. Adds these three nucleotides in the order of C, C, and A to the tRNA nucleotide-73, using CTP and ATP as substrates and producing inorganic pyrophosphate. tRNA 3'-terminal CCA addition is required both for tRNA processing and repair. Also involved in tRNA surveillance by mediating tandem CCA addition to generate a CCACCA at the 3' terminus of unstable tRNAs. While stable tRNAs receive only 3'-terminal CCA, unstable tRNAs are marked with CCACCA and rapidly degraded. This is Multifunctional CCA protein from Acinetobacter baumannii (strain ATCC 17978 / DSM 105126 / CIP 53.77 / LMG 1025 / NCDC KC755 / 5377).